A 292-amino-acid chain; its full sequence is Manganese transport system membrane protein MntC (292 aa).

8 consecutive transmembrane segments (helical) span residues 20-40, 58-78, 96-116, 137-157, 168-188, 190-210, 226-246, and 249-269; these read ALTA…FIIL, VVIA…TGVI, SAIG…ITGM, TDLW…ILFY, VMAQ…MLLL, LVTV…MLIT, LCLA…FSVI, and VASG…AFFF.

This sequence belongs to the ABC-3 integral membrane protein family.

It localises to the cell membrane. In terms of biological role, this protein is probably a component of a manganese permease, a binding protein-dependent, ATP-driven transport system. The polypeptide is Manganese transport system membrane protein MntC (mntC) (Halalkalibacterium halodurans (strain ATCC BAA-125 / DSM 18197 / FERM 7344 / JCM 9153 / C-125) (Bacillus halodurans)).